Reading from the N-terminus, the 266-residue chain is Hydroxyethylthiazole kinase (266 aa).

Residue Met39 participates in substrate binding. 2 residues coordinate ATP: Lys115 and Thr160. Substrate is bound at residue Gly187.

This sequence belongs to the Thz kinase family. Mg(2+) serves as cofactor.

The enzyme catalyses 5-(2-hydroxyethyl)-4-methylthiazole + ATP = 4-methyl-5-(2-phosphooxyethyl)-thiazole + ADP + H(+). Its pathway is cofactor biosynthesis; thiamine diphosphate biosynthesis; 4-methyl-5-(2-phosphoethyl)-thiazole from 5-(2-hydroxyethyl)-4-methylthiazole: step 1/1. In terms of biological role, catalyzes the phosphorylation of the hydroxyl group of 4-methyl-5-beta-hydroxyethylthiazole (THZ). The polypeptide is Hydroxyethylthiazole kinase (Staphylococcus aureus (strain MSSA476)).